Here is a 368-residue protein sequence, read N- to C-terminus: MSREIRSLESIISDARENTHEKMLIRKQRDMTTDIAPERDLQGRFCSLRRIGEGTYGVVFKAIHVRDNVKCALKMIRTDRDEEGIPSTCLREISCIKDLQHDNIVTLFDIIYANSKLYMVFEFIDRDLKNLLEMLEPTNSVLPPNYVKSFMWQLLSALSYCHLRRIVHRDLKPQNILVSDSGVIKIADFGLARNFSFPSRNYTHEVVTLWYRPPEILLGSQRYSTSLDMWSLGCIFSEIASNKPLFPGECEISQLFKIFEIVGTPNIKSWPGVDSFPHYKAVFPQWPVNLKKLEETSCLTGNGLDVLREILRYPPERRLTAKGALSHRYFLQNGFTQNRPSVTDLMKDIRAQNRTPPLLNNHQEKSIF.

A Protein kinase domain is found at phenylalanine 45 to phenylalanine 330. ATP is bound by residues isoleucine 51–valine 59 and lysine 74. The active-site Proton acceptor is the aspartate 170. Residues asparagine 175 and aspartate 188 each coordinate Mg(2+).

Belongs to the protein kinase superfamily. CMGC Ser/Thr protein kinase family. CDC2/CDKX subfamily. As to quaternary structure, interacts with cye-1; the interaction likely regulates cdk-2 activity and is probably required for gld-1 phosphorylation. Requires Mg(2+) as cofactor.

The enzyme catalyses L-seryl-[protein] + ATP = O-phospho-L-seryl-[protein] + ADP + H(+). It carries out the reaction L-threonyl-[protein] + ATP = O-phospho-L-threonyl-[protein] + ADP + H(+). In terms of biological role, serine/threonine-protein kinase which, in association with cye-1, regulates proliferation, quiescent state and cell fate during the development of several cell lineages. In the embryo, initiates the establishment of cell polarity through the recruitment of the centrosomal proteins spd-2 and spd-5 during prophase. Phosphorylation and inhibition of the translational repressor gld-1 by the cdk-2/cye-1 complex regulates the pool of germline stem cells and the size of the mitotic zone in the gonads by preventing entry into meiosis. The chain is Cyclin-dependent kinase 2 from Caenorhabditis elegans.